We begin with the raw amino-acid sequence, 285 residues long: Small ribosomal subunit biogenesis GTPase RsgA (285 aa).

The CP-type G domain occupies 61-215 (KNQLIRPKVA…IIDSPGFSSF (155 aa)). Residues 110–113 (TKID) and 159–167 (GQTGVGKTS) contribute to the GTP site. Zn(2+) is bound by residues cysteine 239, cysteine 244, histidine 246, and cysteine 254.

Belongs to the TRAFAC class YlqF/YawG GTPase family. RsgA subfamily. In terms of assembly, monomer. Associates with 30S ribosomal subunit, binds 16S rRNA. The cofactor is Zn(2+).

It is found in the cytoplasm. One of several proteins that assist in the late maturation steps of the functional core of the 30S ribosomal subunit. Helps release RbfA from mature subunits. May play a role in the assembly of ribosomal proteins into the subunit. Circularly permuted GTPase that catalyzes slow GTP hydrolysis, GTPase activity is stimulated by the 30S ribosomal subunit. The sequence is that of Small ribosomal subunit biogenesis GTPase RsgA from Mesomycoplasma hyopneumoniae (strain 7448) (Mycoplasma hyopneumoniae).